A 142-amino-acid chain; its full sequence is Hemoglobin subunit pi (142 aa).

Positions 2–142 (TLTQAEKAAV…VSSVLTEKYR (141 aa)) constitute a Globin domain. Heme b is bound by residues H59 and H88.

It belongs to the globin family.

In terms of biological role, the pi' chain is the counterpart of the alpha chain in the major early embryonic hemoglobin P. This Cairina moschata (Muscovy duck) protein is Hemoglobin subunit pi.